Consider the following 119-residue polypeptide: Holo-[acyl-carrier-protein] synthase (119 aa).

2 residues coordinate Mg(2+): Asp8 and Glu60.

It belongs to the P-Pant transferase superfamily. AcpS family. Requires Mg(2+) as cofactor.

It is found in the cytoplasm. It catalyses the reaction apo-[ACP] + CoA = holo-[ACP] + adenosine 3',5'-bisphosphate + H(+). Transfers the 4'-phosphopantetheine moiety from coenzyme A to a Ser of acyl-carrier-protein. The chain is Holo-[acyl-carrier-protein] synthase from Mycoplasma pneumoniae (strain ATCC 29342 / M129 / Subtype 1) (Mycoplasmoides pneumoniae).